The following is a 238-amino-acid chain: Flagellar L-ring protein (238 aa).

Residues 1-17 (MKRRLLAAGCAMLLLSG) form the signal peptide. The N-palmitoyl cysteine moiety is linked to residue C18. C18 is lipidated: S-diacylglycerol cysteine. The tract at residues 22–50 (RQQPSPVPPVTQPQAYAEPEDTAANPGSL) is disordered.

It belongs to the FlgH family. The basal body constitutes a major portion of the flagellar organelle and consists of four rings (L,P,S, and M) mounted on a central rod.

It is found in the cell outer membrane. Its subcellular location is the bacterial flagellum basal body. Assembles around the rod to form the L-ring and probably protects the motor/basal body from shearing forces during rotation. The sequence is that of Flagellar L-ring protein from Nitratidesulfovibrio vulgaris (strain DSM 19637 / Miyazaki F) (Desulfovibrio vulgaris).